An 816-amino-acid polypeptide reads, in one-letter code: Auxin response factor 12 (816 aa).

Residues 1-10 show a composition bias toward low complexity; it reads MSSSSAASIG. The interval 1–24 is disordered; the sequence is MSSSSAASIGPPQPPPPPAPPEEE. A compositionally biased stretch (pro residues) spans 11 to 20; that stretch reads PPQPPPPPAP. Positions 135 to 237 form a DNA-binding region, TF-B3; the sequence is FCKTLTASDT…QLLLGIRRAS (103 aa). The tract at residues 526–565 is disordered; that stretch reads NDQKQKIQPDQSYQVPTSAVLPSPTSLPSHLREKFGFSDP. A PB1 domain is found at 717–801; it reads RTFVKVYKSG…WYIKILSPED (85 aa).

It belongs to the ARF family. Homodimers and heterodimers.

The protein localises to the nucleus. Its function is as follows. Auxin response factors (ARFs) are transcriptional factors that bind specifically to the DNA sequence 5'-TGTCTC-3' found in the auxin-responsive promoter elements (AuxREs). The polypeptide is Auxin response factor 12 (ARF12) (Oryza sativa subsp. indica (Rice)).